Consider the following 100-residue polypeptide: NADH-quinone oxidoreductase subunit K (100 aa).

3 consecutive transmembrane segments (helical) span residues 4–24 (LNYG…SLLI), 29–49 (IFIL…FILI), and 60–80 (VLYI…LAIF).

It belongs to the complex I subunit 4L family. NDH-1 is composed of 13 different subunits. Subunits NuoA, H, J, K, L, M, N constitute the membrane sector of the complex.

The protein resides in the cell membrane. The catalysed reaction is a quinone + NADH + 5 H(+)(in) = a quinol + NAD(+) + 4 H(+)(out). Its function is as follows. NDH-1 shuttles electrons from NADH, via FMN and iron-sulfur (Fe-S) centers, to quinones in the respiratory chain. The immediate electron acceptor for the enzyme in this species is believed to be ubiquinone. Couples the redox reaction to proton translocation (for every two electrons transferred, four hydrogen ions are translocated across the cytoplasmic membrane), and thus conserves the redox energy in a proton gradient. The protein is NADH-quinone oxidoreductase subunit K of Buchnera aphidicola subsp. Cinara cedri (strain Cc).